Here is a 157-residue protein sequence, read N- to C-terminus: 2-C-methyl-D-erythritol 2,4-cyclodiphosphate synthase (157 aa).

2 residues coordinate a divalent metal cation: Asp8 and His10. Residues 8–10 (DVH) and 34–35 (HS) each bind 4-CDP-2-C-methyl-D-erythritol 2-phosphate. His42 contacts a divalent metal cation. 4-CDP-2-C-methyl-D-erythritol 2-phosphate-binding positions include 56-58 (DIG), 61-65 (FPDTD), 100-106 (AQAPKMA), 132-135 (TTTE), Phe139, and Arg142.

It belongs to the IspF family. Homotrimer. Requires a divalent metal cation as cofactor.

It carries out the reaction 4-CDP-2-C-methyl-D-erythritol 2-phosphate = 2-C-methyl-D-erythritol 2,4-cyclic diphosphate + CMP. It participates in isoprenoid biosynthesis; isopentenyl diphosphate biosynthesis via DXP pathway; isopentenyl diphosphate from 1-deoxy-D-xylulose 5-phosphate: step 4/6. In terms of biological role, involved in the biosynthesis of isopentenyl diphosphate (IPP) and dimethylallyl diphosphate (DMAPP), two major building blocks of isoprenoid compounds. Catalyzes the conversion of 4-diphosphocytidyl-2-C-methyl-D-erythritol 2-phosphate (CDP-ME2P) to 2-C-methyl-D-erythritol 2,4-cyclodiphosphate (ME-CPP) with a corresponding release of cytidine 5-monophosphate (CMP). This chain is 2-C-methyl-D-erythritol 2,4-cyclodiphosphate synthase, found in Pseudomonas savastanoi pv. phaseolicola (strain 1448A / Race 6) (Pseudomonas syringae pv. phaseolicola (strain 1448A / Race 6)).